Consider the following 124-residue polypeptide: Small ribosomal subunit protein uS13 (124 aa).

The interval 95–124 (GLPVRGQRTKTNARTRKGPKRTIAGKKKAR) is disordered.

It belongs to the universal ribosomal protein uS13 family. As to quaternary structure, part of the 30S ribosomal subunit. Forms a loose heterodimer with protein S19. Forms two bridges to the 50S subunit in the 70S ribosome.

Its function is as follows. Located at the top of the head of the 30S subunit, it contacts several helices of the 16S rRNA. In the 70S ribosome it contacts the 23S rRNA (bridge B1a) and protein L5 of the 50S subunit (bridge B1b), connecting the 2 subunits; these bridges are implicated in subunit movement. Contacts the tRNAs in the A and P-sites. This chain is Small ribosomal subunit protein uS13, found in Mycobacteroides abscessus (strain ATCC 19977 / DSM 44196 / CCUG 20993 / CIP 104536 / JCM 13569 / NCTC 13031 / TMC 1543 / L948) (Mycobacterium abscessus).